A 273-amino-acid polypeptide reads, in one-letter code: Urease accessory protein UreD (273 aa).

This sequence belongs to the UreD family. In terms of assembly, ureD, UreF and UreG form a complex that acts as a GTP-hydrolysis-dependent molecular chaperone, activating the urease apoprotein by helping to assemble the nickel containing metallocenter of UreC. The UreE protein probably delivers the nickel.

It is found in the cytoplasm. In terms of biological role, required for maturation of urease via the functional incorporation of the urease nickel metallocenter. This Rhizobium etli (strain ATCC 51251 / DSM 11541 / JCM 21823 / NBRC 15573 / CFN 42) protein is Urease accessory protein UreD.